The primary structure comprises 282 residues: Bis(5'-nucleosyl)-tetraphosphatase, symmetrical (282 aa).

Belongs to the Ap4A hydrolase family.

It carries out the reaction P(1),P(4)-bis(5'-adenosyl) tetraphosphate + H2O = 2 ADP + 2 H(+). Hydrolyzes diadenosine 5',5'''-P1,P4-tetraphosphate to yield ADP. In Escherichia coli O81 (strain ED1a), this protein is Bis(5'-nucleosyl)-tetraphosphatase, symmetrical.